We begin with the raw amino-acid sequence, 326 residues long: MAPFVPYHYSAGQSTIVKFGGLLTTEFLEPPPGRCFLFRQTYRHTIEGSIPENLRKLINSPDRPKGPPPHFHQFQTEYFRVENGVLGISVDGVVRRITPEDGEISVKAGSVHNFFIHPDSPENMTVYLSASDSGNDYQLDRVFFENWYGYWHDALLHDGGIDWIQFLAIQDGGDAYTPAPAWVPFRRQVGYWTCVIVGRWIGGLLGYKPFFREYTTDWDFAVAKMKGSFFQRHLVHAAFEEEKSWTKQAELEPKGKPENAEFEPWTEDMSPAPLSLGPVAYEQGLFHGVQPGSVNGSNGHSTGVESKLEQLGSRAQRRVVIDDAGK.

The tract at residues 287-326 is disordered; that stretch reads HGVQPGSVNGSNGHSTGVESKLEQLGSRAQRRVVIDDAGK. Residues 292–304 show a composition bias toward polar residues; it reads GSVNGSNGHSTGV.

It belongs to the oxidoreductase OpS7 family.

The protein resides in the vacuole lumen. It is found in the cytoplasmic vesicle lumen. The protein operates within mycotoxin biosynthesis; patulin biosynthesis. Functionally, probable oxidoreductase; part of the gene cluster that mediates the biosynthesis of patulin, an acetate-derived tetraketide mycotoxin produced by several fungal species that shows antimicrobial properties against several bacteria. PatJ acts with patO in the vacuole to convert gentisyl alcohol to isoepoxydon. The pathway begins with the synthesis of 6-methylsalicylic acid by the polyketide synthase (PKS) patK via condensation of acetate and malonate units. The 6-methylsalicylic acid decarboxylase patG then catalyzes the decarboxylation of 6-methylsalicylic acid to yield m-cresol (also known as 3-methylphenol). These first reactions occur in the cytosol. The intermediate m-cresol is then transported into the endoplasmic reticulum where the cytochrome P450 monooxygenase patH converts it to m-hydroxybenzyl alcohol, which is further converted to gentisyl alcohol by the cytochrome P450 monooxygenase patI. The oxidoreductases patJ and patO further convert gentisyl alcohol to isoepoxydon in the vacuole. PatN catalyzes then the transformation of isoepoxydon into phyllostine. The cluster protein patF is responsible for the conversion from phyllostine to neopatulin whereas the alcohol dehydrogenase patD converts neopatulin to E-ascladiol. The steps between isoepoxydon and E-ascladiol occur in the cytosol, and E-ascladiol is probably secreted to the extracellular space by one of the cluster-specific transporters patC or patM. Finally, the secreted patulin synthase patE catalyzes the conversion of E-ascladiol to patulin. The protein is Probable oxidoreductase patJ of Penicillium expansum (Blue mold rot fungus).